The primary structure comprises 325 residues: Solute-binding protein Bpro_4736 (325 aa).

An N-terminal signal peptide occupies residues 1-27 (MKTRTLKVLKPTLALLLAASFSAGALA). Position 168–173 (168–173 (RISPVY)) interacts with phenylglyoxylate.

Belongs to the bacterial solute-binding protein 7 family. As to quaternary structure, the complex is comprised of an extracytoplasmic solute-binding protein and a heteromeric permease formed by two transmembrane proteins.

The protein resides in the periplasm. Solute-binding protein that binds phenylglyoxylate (in vitro). Probably part of a tripartite ATP-independent periplasmic (TRAP) transport system that mediates solute transport into the cytoplasm. The sequence is that of Solute-binding protein Bpro_4736 from Polaromonas sp. (strain JS666 / ATCC BAA-500).